The following is a 158-amino-acid chain: NAD(P)H-quinone oxidoreductase subunit J, chloroplastic (158 aa).

This sequence belongs to the complex I 30 kDa subunit family. NDH is composed of at least 16 different subunits, 5 of which are encoded in the nucleus.

The protein localises to the plastid. Its subcellular location is the chloroplast thylakoid membrane. It carries out the reaction a plastoquinone + NADH + (n+1) H(+)(in) = a plastoquinol + NAD(+) + n H(+)(out). The enzyme catalyses a plastoquinone + NADPH + (n+1) H(+)(in) = a plastoquinol + NADP(+) + n H(+)(out). NDH shuttles electrons from NAD(P)H:plastoquinone, via FMN and iron-sulfur (Fe-S) centers, to quinones in the photosynthetic chain and possibly in a chloroplast respiratory chain. The immediate electron acceptor for the enzyme in this species is believed to be plastoquinone. Couples the redox reaction to proton translocation, and thus conserves the redox energy in a proton gradient. The sequence is that of NAD(P)H-quinone oxidoreductase subunit J, chloroplastic from Panax ginseng (Korean ginseng).